The chain runs to 259 residues: Small ribosomal subunit protein uS2 (259 aa).

Belongs to the universal ribosomal protein uS2 family.

In Streptococcus pneumoniae serotype 4 (strain ATCC BAA-334 / TIGR4), this protein is Small ribosomal subunit protein uS2.